Reading from the N-terminus, the 238-residue chain is CASP-like protein 2BC2 (238 aa).

Residues 1 to 66 are Cytoplasmic-facing; it reads MPSSTYPRRR…FHQKVAVEKR (66 aa). Residues 67–87 traverse the membrane as a helical segment; the sequence is LKIGEVILRFAMIALALVAAV. The Extracellular segment spans residues 88-111; sequence RVGTDTQTRTIFTIEKKAKYSDMK. A helical transmembrane segment spans residues 112–132; that stretch reads ALVFLVVMNGIVASYSLLQGL. At 133–148 the chain is on the cytoplasmic side; the sequence is RCVLSIYTQSPLTSKP. Residues 149–169 form a helical membrane-spanning segment; sequence LAWLIFALDQTMAYFSLAAAA. The Extracellular segment spans residues 170-200; the sequence is AAAESAYLAERGQTEFQWMKVCIFYEKFCHQ. A helical transmembrane segment spans residues 201–221; it reads IGEGLVSTFLVSLSMATVSGM. Residues 222–238 lie on the Cytoplasmic side of the membrane; sequence SAYHLFRLYGSKGKSIQ.

Belongs to the Casparian strip membrane proteins (CASP) family. In terms of assembly, homodimer and heterodimers.

The protein resides in the cell membrane. The polypeptide is CASP-like protein 2BC2 (Picea sitchensis (Sitka spruce)).